The chain runs to 467 residues: tRNA modification GTPase MnmE (467 aa).

Residues Arg-30, Glu-92, and Arg-131 each contribute to the (6S)-5-formyl-5,6,7,8-tetrahydrofolate site. Residues 226–388 enclose the TrmE-type G domain; it reads GLKVAIIGRP…LEAAILNAVN (163 aa). K(+) is bound at residue Asn-236. GTP-binding positions include 236–241, 255–261, and 280–283; these read NVGKSS, TDLPGTT, and DTAG. Ser-240 contacts Mg(2+). Positions 255, 257, and 260 each coordinate K(+). Thr-261 is a Mg(2+) binding site. Residue Lys-467 coordinates (6S)-5-formyl-5,6,7,8-tetrahydrofolate.

This sequence belongs to the TRAFAC class TrmE-Era-EngA-EngB-Septin-like GTPase superfamily. TrmE GTPase family. Homodimer. Heterotetramer of two MnmE and two MnmG subunits. The cofactor is K(+).

The protein resides in the cytoplasm. Functionally, exhibits a very high intrinsic GTPase hydrolysis rate. Involved in the addition of a carboxymethylaminomethyl (cmnm) group at the wobble position (U34) of certain tRNAs, forming tRNA-cmnm(5)s(2)U34. The chain is tRNA modification GTPase MnmE from Trichodesmium erythraeum (strain IMS101).